A 212-amino-acid chain; its full sequence is Thiamine-phosphate synthase (212 aa).

4-amino-2-methyl-5-(diphosphooxymethyl)pyrimidine is bound by residues 39–43 and asparagine 71; that span reads QLRIK. 2 residues coordinate Mg(2+): aspartate 72 and aspartate 91. Serine 110 contributes to the 4-amino-2-methyl-5-(diphosphooxymethyl)pyrimidine binding site. 136-138 is a 2-[(2R,5Z)-2-carboxy-4-methylthiazol-5(2H)-ylidene]ethyl phosphate binding site; the sequence is TQT. Lysine 139 is a 4-amino-2-methyl-5-(diphosphooxymethyl)pyrimidine binding site. 2-[(2R,5Z)-2-carboxy-4-methylthiazol-5(2H)-ylidene]ethyl phosphate is bound by residues glycine 168 and 188-189; that span reads VS.

The protein belongs to the thiamine-phosphate synthase family. Mg(2+) serves as cofactor.

It catalyses the reaction 2-[(2R,5Z)-2-carboxy-4-methylthiazol-5(2H)-ylidene]ethyl phosphate + 4-amino-2-methyl-5-(diphosphooxymethyl)pyrimidine + 2 H(+) = thiamine phosphate + CO2 + diphosphate. The catalysed reaction is 2-(2-carboxy-4-methylthiazol-5-yl)ethyl phosphate + 4-amino-2-methyl-5-(diphosphooxymethyl)pyrimidine + 2 H(+) = thiamine phosphate + CO2 + diphosphate. The enzyme catalyses 4-methyl-5-(2-phosphooxyethyl)-thiazole + 4-amino-2-methyl-5-(diphosphooxymethyl)pyrimidine + H(+) = thiamine phosphate + diphosphate. It functions in the pathway cofactor biosynthesis; thiamine diphosphate biosynthesis; thiamine phosphate from 4-amino-2-methyl-5-diphosphomethylpyrimidine and 4-methyl-5-(2-phosphoethyl)-thiazole: step 1/1. Condenses 4-methyl-5-(beta-hydroxyethyl)thiazole monophosphate (THZ-P) and 2-methyl-4-amino-5-hydroxymethyl pyrimidine pyrophosphate (HMP-PP) to form thiamine monophosphate (TMP). This Serratia proteamaculans (strain 568) protein is Thiamine-phosphate synthase.